The primary structure comprises 217 residues: Very-long-chain (3R)-3-hydroxyacyl-CoA dehydratase PHS1 (217 aa).

Over M1 to F11 the chain is Cytoplasmic. Residues L12 to L29 traverse the membrane as a helical segment. Residues V30–K47 lie on the Lumenal side of the membrane. The chain crosses the membrane as a helical span at residues N48 to L66. Residues G67–T76 are Cytoplasmic-facing. Residues V77–L94 traverse the membrane as a helical segment. At P95 to G99 the chain is on the lumenal side. A helical membrane pass occupies residues V100–I117. Topologically, residues V118–Y142 are cytoplasmic. Residues N143–I160 form a helical membrane-spanning segment. Catalysis depends on residues Y149 and E156. At Y161–I178 the chain is on the lumenal side. The chain crosses the membrane as a helical span at residues L179–H196. Residues M197–I217 are Cytoplasmic-facing. The short motif at K214–I217 is the Endoplasmic reticulum retention signal element.

It belongs to the very long-chain fatty acids dehydratase HACD family.

It is found in the endoplasmic reticulum membrane. It localises to the vacuole membrane. It carries out the reaction a very-long-chain (3R)-3-hydroxyacyl-CoA = a very-long-chain (2E)-enoyl-CoA + H2O. The enzyme catalyses (3R)-hydroxyeicosanoyl-CoA = (2E)-eicosenoyl-CoA + H2O. It catalyses the reaction (3R)-hydroxydocosanoyl-CoA = (2E)-docosenoyl-CoA + H2O. The catalysed reaction is (3R)-hydroxyoctadecanoyl-CoA = (2E)-octadecenoyl-CoA + H2O. It carries out the reaction (3R)-hydroxytetracosanoyl-CoA = (2E)-tetracosenoyl-CoA + H2O. The enzyme catalyses (3R)-hydroxyhexacosanoyl-CoA = (2E)-hexacosenoyl-CoA + H2O. It catalyses the reaction (3R)-hydroxyhexadecanoyl-CoA = (2E)-hexadecenoyl-CoA + H2O. It participates in lipid metabolism; fatty acid biosynthesis. Its function is as follows. Catalyzes the third of the four reactions of the long-chain fatty acids elongation cycle. This endoplasmic reticulum-bound enzymatic process, allows the addition of two carbons to the chain of long- and very long-chain fatty acids/VLCFAs per cycle. This enzyme catalyzes the dehydration of the 3-hydroxyacyl-CoA intermediate into trans-2,3-enoyl-CoA, within each cycle of fatty acid elongation. Thereby, it participates in the production of VLCFAs of different chain lengths that are involved in multiple biological processes as precursors of membrane lipids and lipid mediators. In Saccharomyces cerevisiae (strain ATCC 204508 / S288c) (Baker's yeast), this protein is Very-long-chain (3R)-3-hydroxyacyl-CoA dehydratase PHS1 (PHS1).